Consider the following 598-residue polypeptide: Serine/threonine-protein kinase PLK1 (598 aa).

Residues 1-23 are disordered; that stretch reads MAQVAGKKLTVAPEAAKPPGIPG. Residue threonine 10 is modified to Phosphothreonine; by PKA; in vitro. Serine 25 and serine 26 each carry phosphoserine. The region spanning 44–296 is the Protein kinase domain; sequence YLRGRFLGKG…IDDLLNDEFF (253 aa). ATP contacts are provided by residues 50 to 58, lysine 73, and glutamate 122; that span reads LGKGGFAKC. Aspartate 167 acts as the Proton acceptor in catalysis. Residues 169–172 and aspartate 185 each bind ATP; that span reads KLGN. An activation loop region spans residues 185-212; that stretch reads DFGLATKVEYDGERKKTLCGTPNYIAPE. Phosphothreonine; by PKA is present on threonine 201. 2 positions are modified to phosphoserine; by autocatalysis: serine 260 and serine 326. The D-box that targets the protein for proteasomal degradation in anaphase signature appears at 328–331; it reads RKPL. Serine 340 is subject to Phosphoserine; by CDK1. Positions 404 to 482 constitute a POLO box 1 domain; it reads WISKWVDYSD…LKYFRNYMSE (79 aa). Residues 487–501 form a linker region; the sequence is AGANTTPREGDELAR. In terms of domain architecture, POLO box 2 spans 504 to 586; the sequence is FLRTWFRTRS…ARTMVEKLQS (83 aa). The interval 532–534 is important for interaction with phosphorylated proteins; it reads HTK.

This sequence belongs to the protein kinase superfamily. Ser/Thr protein kinase family. In terms of assembly, interacts with plk1 and kif2a. Interacts with fbxo5. Activated by phosphorylation on Thr-201 during M phase. Phosphorylated by stk10, leading to activation during oocyte maturation. Post-translationally, ubiquitinated by the anaphase promoting complex/cyclosome (APC/C) in anaphase and following DNA damage, leading to its degradation by the proteasome. Protein levels are down-regulated by proteasomal degradation in anaphase.

Its subcellular location is the nucleus. The protein localises to the cytoplasm. It is found in the cytoskeleton. It localises to the microtubule organizing center. The protein resides in the centrosome. Its subcellular location is the spindle. The protein localises to the midbody. It catalyses the reaction L-seryl-[protein] + ATP = O-phospho-L-seryl-[protein] + ADP + H(+). The enzyme catalyses L-threonyl-[protein] + ATP = O-phospho-L-threonyl-[protein] + ADP + H(+). Its activity is regulated as follows. Activated by phosphorylation of Thr-201. In terms of biological role, serine/threonine-protein kinase that performs several important functions throughout M phase of the cell cycle, including the regulation of centrosome maturation and spindle assembly, the removal of cohesins from chromosome arms, the inactivation of anaphase-promoting complex/cyclosome (APC/C) inhibitors, and the regulation of mitotic exit and cytokinesis. Polo-like kinase proteins act by binding and phosphorylating proteins that are already phosphorylated on a specific motif recognized by the POLO box domains. Phosphorylates cdc25, pkmyt1/myt1, stag2/sa2, tpx2. Plays multiple essential roles during mitosis. Phosphorylates the N-terminal domain of cdc25, which leads to cyclin b-cdc2 activation and mitotic entry. Also required for organization of bipolar spindles, and for exit from mitosis. Involved in kinetochore functions and sister chromatid cohesion by phosphorylating stag2/sa2. The protein is Serine/threonine-protein kinase PLK1 (plk1) of Xenopus laevis (African clawed frog).